The chain runs to 130 residues: Small ribosomal subunit protein uS9 (130 aa).

The protein belongs to the universal ribosomal protein uS9 family.

This is Small ribosomal subunit protein uS9 from Pseudomonas fluorescens (strain SBW25).